The chain runs to 357 residues: Arginine kinase (357 aa).

Ala2 is subject to N-acetylalanine. Positions 9–91 (KLDEGFKKLE…FDPIIEDYHK (83 aa)) constitute a Phosphagen kinase N-terminal domain. 64–68 (GVGVY) serves as a coordination point for L-arginine. A Phosphagen kinase C-terminal domain is found at 119 to 356 (FVISTRVRCG…LELIKIEKEM (238 aa)). Residues 122–126 (STRVR) and His185 each bind ATP. Glu225 is a binding site for L-arginine. Arg229 is a binding site for ATP. Cys271 is an L-arginine binding site. ATP is bound by residues 280–284 (RASVH) and 309–314 (RGTRGE). Glu314 serves as a coordination point for L-arginine.

It belongs to the ATP:guanido phosphotransferase family.

It catalyses the reaction L-arginine + ATP = N(omega)-phospho-L-arginine + ADP + H(+). The protein is Arginine kinase of Eriocheir sinensis (Chinese mitten crab).